The sequence spans 488 residues: Cytochrome P450 monooxygenase orf2 (488 aa).

The chain crosses the membrane as a helical span at residues 7–27 (LPGIFLPLAGCVLALSLTTIV). Cysteine 432 provides a ligand contact to heme.

The protein belongs to the cytochrome P450 family. The cofactor is heme.

It is found in the membrane. The protein operates within secondary metabolite biosynthesis. In terms of biological role, cytochrome P450 monooxygenase; part of the gene cluster that mediates the biosynthesis of nigerpyrone and its derivatives carbonarone A and pestalamide A. The biosynthesis pathway begins with the polyketide assembly by epaA to form phenylacetyl triketide precursor from successive condensation of two malonyl-CoA, presumably with one phenylacetyl-CoA starter unit produced by the phenylacetyl-CoA ligase epaB. For the nigerpyrone biosynthesis, the reactive polyketide chain is released as an aldehyde through the R-domain. A nonenzymatic cyclization and dehydration may create nigerpyrone. For the biosynthesis of carbonarone A and pestalamide A, an extra methyl group is added through the C-methyltransferase domain. Several further steps involving the dehydrogenase orf1, the cytochrome P450 monooxygenase orf2 and the FAD-dependent monooxygenase orf3 are required to form a carbonarone A precursor which is converted to carbonarone A via cyclization. The O-acetyltransferase epaC could catalyze the transfer of 2-methylsuccinyl-CoA, a common intermediate in the ethylmalonyl-CoA pathway, to generate the final product pestalamide A. The sequence is that of Cytochrome P450 monooxygenase orf2 from Aspergillus niger (strain ATCC MYA-4892 / CBS 513.88 / FGSC A1513).